We begin with the raw amino-acid sequence, 135 residues long: uncharacterized protein (135 aa).

This is an uncharacterized protein from Acanthamoeba polyphaga (Amoeba).